The following is a 712-amino-acid chain: Ribosomal RNA large subunit methyltransferase K/L (712 aa).

The THUMP domain occupies 42-153 (QALRIVMWSR…KGRASLSIDL (112 aa)).

Belongs to the methyltransferase superfamily. RlmKL family.

It is found in the cytoplasm. It carries out the reaction guanosine(2445) in 23S rRNA + S-adenosyl-L-methionine = N(2)-methylguanosine(2445) in 23S rRNA + S-adenosyl-L-homocysteine + H(+). The enzyme catalyses guanosine(2069) in 23S rRNA + S-adenosyl-L-methionine = N(2)-methylguanosine(2069) in 23S rRNA + S-adenosyl-L-homocysteine + H(+). In terms of biological role, specifically methylates the guanine in position 2445 (m2G2445) and the guanine in position 2069 (m7G2069) of 23S rRNA. The chain is Ribosomal RNA large subunit methyltransferase K/L from Stenotrophomonas maltophilia (strain K279a).